The chain runs to 591 residues: V-type ATP synthase alpha chain (591 aa).

ATP is bound at residue 232 to 239 (GPFGAGKT).

It belongs to the ATPase alpha/beta chains family.

The catalysed reaction is ATP + H2O + 4 H(+)(in) = ADP + phosphate + 5 H(+)(out). In terms of biological role, produces ATP from ADP in the presence of a proton gradient across the membrane. The V-type alpha chain is a catalytic subunit. The chain is V-type ATP synthase alpha chain from Clostridium perfringens (strain SM101 / Type A).